The chain runs to 414 residues: Esterase FrsA (414 aa).

Belongs to the FrsA family.

The enzyme catalyses a carboxylic ester + H2O = an alcohol + a carboxylate + H(+). Functionally, catalyzes the hydrolysis of esters. The protein is Esterase FrsA of Escherichia coli O157:H7.